The sequence spans 113 residues: Endoribonuclease SymE (113 aa).

In terms of domain architecture, SpoVT-AbrB spans 29-74 (SRYPDYSRIPAITLKGQWLEAAGFATGTAVDVKVMEGCIVLTAQPP).

It belongs to the SymE family.

The protein localises to the cytoplasm. Its function is as follows. Involved in the degradation and recycling of damaged RNA. It is itself a target for degradation by the ATP-dependent protease Lon. This Escherichia coli O6:K15:H31 (strain 536 / UPEC) protein is Endoribonuclease SymE.